Here is a 300-residue protein sequence, read N- to C-terminus: Ribosomal protein L11 methyltransferase (300 aa).

Positions 152, 173, 195, and 234 each coordinate S-adenosyl-L-methionine.

Belongs to the methyltransferase superfamily. PrmA family.

The protein resides in the cytoplasm. It carries out the reaction L-lysyl-[protein] + 3 S-adenosyl-L-methionine = N(6),N(6),N(6)-trimethyl-L-lysyl-[protein] + 3 S-adenosyl-L-homocysteine + 3 H(+). Functionally, methylates ribosomal protein L11. The polypeptide is Ribosomal protein L11 methyltransferase (Burkholderia cenocepacia (strain ATCC BAA-245 / DSM 16553 / LMG 16656 / NCTC 13227 / J2315 / CF5610) (Burkholderia cepacia (strain J2315))).